The chain runs to 394 residues: Acetate kinase (394 aa).

Asn7 is a Mg(2+) binding site. Lys14 contributes to the ATP binding site. Substrate is bound at residue Arg90. Asp147 functions as the Proton donor/acceptor in the catalytic mechanism. ATP-binding positions include 204–208, 278–280, and 326–330; these read HLGNG, DLR, and GIGEN. Glu380 provides a ligand contact to Mg(2+).

It belongs to the acetokinase family. In terms of assembly, homodimer. It depends on Mg(2+) as a cofactor. Mn(2+) serves as cofactor.

Its subcellular location is the cytoplasm. The enzyme catalyses acetate + ATP = acetyl phosphate + ADP. Its pathway is metabolic intermediate biosynthesis; acetyl-CoA biosynthesis; acetyl-CoA from acetate: step 1/2. Catalyzes the formation of acetyl phosphate from acetate and ATP. Can also catalyze the reverse reaction. The polypeptide is Acetate kinase (Flavobacterium johnsoniae (strain ATCC 17061 / DSM 2064 / JCM 8514 / BCRC 14874 / CCUG 350202 / NBRC 14942 / NCIMB 11054 / UW101) (Cytophaga johnsonae)).